The chain runs to 87 residues: Down syndrome critical region protein 10 (87 aa).

This Pan troglodytes (Chimpanzee) protein is Down syndrome critical region protein 10 (DSCR10).